The chain runs to 295 residues: MMRILLFVATNLAVVLVASITLSLFGFNGFMAANGVDLNLSSLLVFCAVFGFAGSLVSLFISKWMAKMTTGTQIISQPRTRHEQWLLQTVEELSREAGIKMPEVGIFPAYEANAFATGWNRNDALVAVSQGLLERFSPDEVRAVLAHEIGHVANGDMVTLALVQGVVNTFVMFFARIIGNFVDKVIFKNEEGQGIAYYVATIVAELILGILASMIVMWFSRRREFRADEAGAQLAGTAAMIGALQRLRVEQGLPVHMPDTMKAFGINGGLKHGLAGLLMSHPPLEERIEALRRRG.

The next 2 helical transmembrane spans lie at 4–24 (ILLF…TLSL) and 41–61 (SSLL…SLFI). A Zn(2+)-binding site is contributed by H147. Residue E148 is part of the active site. Position 151 (H151) interacts with Zn(2+). 2 consecutive transmembrane segments (helical) span residues 158–178 (VTLA…ARII) and 199–219 (VATI…VMWF). E224 is a binding site for Zn(2+).

This sequence belongs to the peptidase M48B family. Zn(2+) is required as a cofactor.

The protein localises to the cell inner membrane. The chain is Protease HtpX from Pseudomonas putida (strain ATCC 700007 / DSM 6899 / JCM 31910 / BCRC 17059 / LMG 24140 / F1).